The chain runs to 240 residues: tRNA (guanine-N(1)-)-methyltransferase (240 aa).

Residues glycine 110 and 129–134 (LGDFVL) each bind S-adenosyl-L-methionine.

This sequence belongs to the RNA methyltransferase TrmD family. Homodimer.

The protein localises to the cytoplasm. The catalysed reaction is guanosine(37) in tRNA + S-adenosyl-L-methionine = N(1)-methylguanosine(37) in tRNA + S-adenosyl-L-homocysteine + H(+). In terms of biological role, specifically methylates guanosine-37 in various tRNAs. In Clostridium botulinum (strain 657 / Type Ba4), this protein is tRNA (guanine-N(1)-)-methyltransferase.